The following is a 195-amino-acid chain: L-rhamnose-binding lectin CSL3 (195 aa).

2 consecutive SUEL-type lectin domains span residues 1–95 and 105–195; these read AISI…YSCV and ICEG…YTCD.

In terms of biological role, L-rhamnose binding lectin. Has hemagglutinating activity towards rabbit erythrocytes, human type A erythrocytes, human type B erythrocytes, human type O erythrocytes and sheep erythrocytes. Hemagglutinating activity is inhibited by smooth-type lipopolysaccharide (LPS) from S.flexneri 1A, A.salmonicida and E.coli K12, but not by rough-type LPS from S.flexneri, E.coli K12 and E.coli EH100. Agglutinates E.coli K12 and B.subtilis. This chain is L-rhamnose-binding lectin CSL3, found in Oncorhynchus keta (Chum salmon).